The following is a 310-amino-acid chain: Olfactory receptor 8G3 (310 aa).

Residues 1 to 25 lie on the Extracellular side of the membrane; sequence MDPGNHSSVTESILAGLSEQPELQL. The N-linked (GlcNAc...) asparagine glycan is linked to Asn-5. The chain crosses the membrane as a helical span at residues 26–46; it reads RLFLLFLGICVVTVVGNLGMI. Residues 47–54 lie on the Cytoplasmic side of the membrane; it reads TLIGLSSH. Residues 55–75 traverse the membrane as a helical segment; it reads LHTPMYYFLSSLSFIDFCHST. Residues 76-99 are Extracellular-facing; that stretch reads VITPKMLVNFATEKNIISYPECMA. A disulfide bridge links Cys-97 with Cys-189. Residues 100–120 form a helical membrane-spanning segment; it reads QLYLFSIFAIAECHMLAAMAY. Residues 121–139 are Cytoplasmic-facing; the sequence is DCYVAICSPLLYNVIMSYH. The helical transmembrane segment at 140–160 threads the bilayer; it reads HCFWLTVGVYILGILGSTIHT. The Extracellular portion of the chain corresponds to 161–197; that stretch reads SFMLRLFLCKTNVINHYFCDLFPLLGLSCSSTYINEL. The chain crosses the membrane as a helical span at residues 198-217; that stretch reads LVLVLSAFNILMPALTILAS. Topologically, residues 218 to 237 are cytoplasmic; the sequence is YIFIIASILRIHSTEGRSKA. The chain crosses the membrane as a helical span at residues 238–258; it reads FSTCSSHILAVAVFFGSAAFM. Topologically, residues 259 to 271 are extracellular; that stretch reads YLQPSSVSSMDQR. The helical transmembrane segment at 272 to 292 threads the bilayer; it reads KVSSVFYTTIVPMLNPLIYSL. Over 293–310 the chain is Cytoplasmic; it reads RNKDVKLAVKKILHQTAC.

It belongs to the G-protein coupled receptor 1 family.

The protein resides in the cell membrane. Functionally, odorant receptor. In Homo sapiens (Human), this protein is Olfactory receptor 8G3.